Consider the following 371-residue polypeptide: Polygalacturonase (371 aa).

A signal peptide spans Met-1 to Ser-19. A propeptide spanning residues Ala-20 to Ser-34 is cleaved from the precursor. The cysteines at positions 38 and 53 are disulfide-linked. PbH1 repeat units lie at residues Gly-95–Ala-117, Ser-165–Glu-195, Ser-196–Ser-217, Gly-218–Ser-238, Val-247–Thr-268, Val-276–Gln-298, and Thr-310–Ser-355. Asp-210 (proton donor) is an active-site residue. A disulfide bond links Cys-212 and Cys-228. His-232 is an active-site residue. N-linked (GlcNAc...) asparagine glycosylation is present at Asn-249. 2 cysteine pairs are disulfide-bonded: Cys-338-Cys-343 and Cys-362-Cys-371.

The protein belongs to the glycosyl hydrolase 28 family.

It localises to the secreted. It carries out the reaction (1,4-alpha-D-galacturonosyl)n+m + H2O = (1,4-alpha-D-galacturonosyl)n + (1,4-alpha-D-galacturonosyl)m.. The protein is Polygalacturonase of Penicillium janthinellum (Penicillium vitale).